The chain runs to 348 residues: Phosphoribosylformylglycinamidine cyclo-ligase (348 aa).

It belongs to the AIR synthase family.

The protein resides in the cytoplasm. It catalyses the reaction 2-formamido-N(1)-(5-O-phospho-beta-D-ribosyl)acetamidine + ATP = 5-amino-1-(5-phospho-beta-D-ribosyl)imidazole + ADP + phosphate + H(+). Its pathway is purine metabolism; IMP biosynthesis via de novo pathway; 5-amino-1-(5-phospho-D-ribosyl)imidazole from N(2)-formyl-N(1)-(5-phospho-D-ribosyl)glycinamide: step 2/2. The polypeptide is Phosphoribosylformylglycinamidine cyclo-ligase (Cereibacter sphaeroides (strain ATCC 17023 / DSM 158 / JCM 6121 / CCUG 31486 / LMG 2827 / NBRC 12203 / NCIMB 8253 / ATH 2.4.1.) (Rhodobacter sphaeroides)).